The sequence spans 346 residues: N-acetyl-gamma-glutamyl-phosphate reductase (346 aa).

The active site involves C151.

This sequence belongs to the NAGSA dehydrogenase family. Type 1 subfamily.

It is found in the cytoplasm. It carries out the reaction N-acetyl-L-glutamate 5-semialdehyde + phosphate + NADP(+) = N-acetyl-L-glutamyl 5-phosphate + NADPH + H(+). It participates in amino-acid biosynthesis; L-arginine biosynthesis; N(2)-acetyl-L-ornithine from L-glutamate: step 3/4. In terms of biological role, catalyzes the NADPH-dependent reduction of N-acetyl-5-glutamyl phosphate to yield N-acetyl-L-glutamate 5-semialdehyde. The polypeptide is N-acetyl-gamma-glutamyl-phosphate reductase (Ehrlichia canis (strain Jake)).